A 175-amino-acid chain; its full sequence is NADH-ubiquinone oxidoreductase chain 6 (175 aa).

Transmembrane regions (helical) follow at residues 1 to 21 (MMLYIVFILSVIFVIGFVGFS), 25 to 45 (SPIYGGLGLIVSGGVGCGIVL), 47 to 67 (FGGSFLGLMVFLIYLGGMMVV), 88 to 108 (AVLGAFITALLMEFFMVYYVL), and 149 to 169 (YGTWLVIVTGWSLFIGVVVIM).

This sequence belongs to the complex I subunit 6 family. Core subunit of respiratory chain NADH dehydrogenase (Complex I) which is composed of 45 different subunits.

It is found in the mitochondrion inner membrane. It carries out the reaction a ubiquinone + NADH + 5 H(+)(in) = a ubiquinol + NAD(+) + 4 H(+)(out). In terms of biological role, core subunit of the mitochondrial membrane respiratory chain NADH dehydrogenase (Complex I) which catalyzes electron transfer from NADH through the respiratory chain, using ubiquinone as an electron acceptor. Essential for the catalytic activity and assembly of complex I. The chain is NADH-ubiquinone oxidoreductase chain 6 (MT-ND6) from Bos mutus grunniens (Wild yak).